The primary structure comprises 296 residues: Ribose import binding protein RbsB (296 aa).

The signal sequence occupies residues 1 to 25 (MNMKKLATLVSAVALSATVSANAMA).

It belongs to the bacterial solute-binding protein 2 family. In terms of assembly, the complex is composed of an ATP-binding protein (RbsA), two transmembrane proteins (RbsC) and a solute-binding protein (RbsB).

It localises to the periplasm. Functionally, part of the ABC transporter complex RbsABC involved in ribose import. Binds ribose. Also serves as the primary chemoreceptor for chemotaxis. This chain is Ribose import binding protein RbsB, found in Escherichia coli (strain K12).